A 368-amino-acid chain; its full sequence is tRNA-specific 2-thiouridylase MnmA (368 aa).

Residues 12–19 (AMSGGVDS) and M38 contribute to the ATP site. The interval 98 to 100 (NPD) is interaction with target base in tRNA. The Nucleophile role is filled by C103. An intrachain disulfide couples C103 to C200. G128 contributes to the ATP binding site. The interval 150–152 (KDQ) is interaction with tRNA. The active-site Cysteine persulfide intermediate is the C200. Positions 312-313 (RY) are interaction with tRNA.

Belongs to the MnmA/TRMU family. As to quaternary structure, interacts with TusE.

The protein localises to the cytoplasm. It catalyses the reaction S-sulfanyl-L-cysteinyl-[protein] + uridine(34) in tRNA + AH2 + ATP = 2-thiouridine(34) in tRNA + L-cysteinyl-[protein] + A + AMP + diphosphate + H(+). In terms of biological role, catalyzes the 2-thiolation of uridine at the wobble position (U34) of tRNA(Lys), tRNA(Glu) and tRNA(Gln), leading to the formation of s(2)U34, the first step of tRNA-mnm(5)s(2)U34 synthesis. Sulfur is provided by IscS, via a sulfur-relay system. Binds ATP and its substrate tRNAs. In Buchnera aphidicola subsp. Acyrthosiphon pisum (strain APS) (Acyrthosiphon pisum symbiotic bacterium), this protein is tRNA-specific 2-thiouridylase MnmA.